A 167-amino-acid polypeptide reads, in one-letter code: Small ribosomal subunit protein uS5 (167 aa).

The S5 DRBM domain maps to 12 to 75 (LQEKLIAVNR…EKARRNMVTI (64 aa)).

The protein belongs to the universal ribosomal protein uS5 family. Part of the 30S ribosomal subunit. Contacts proteins S4 and S8.

In terms of biological role, with S4 and S12 plays an important role in translational accuracy. Functionally, located at the back of the 30S subunit body where it stabilizes the conformation of the head with respect to the body. The polypeptide is Small ribosomal subunit protein uS5 (Vibrio vulnificus (strain CMCP6)).